The sequence spans 837 residues: Mannosyl-oligosaccharide glucosidase (837 aa).

The span at 1–10 shows a compositional bias: basic residues; the sequence is MARGERRRRA. Residues 1 to 38 are Cytoplasmic-facing; the sequence is MARGERRRRAVPAEGVRTAERAARGGPGRRDGRGGGPR. The tract at residues 1-39 is disordered; the sequence is MARGERRRRAVPAEGVRTAERAARGGPGRRDGRGGGPRS. The Endoplasmic reticulum targeting signature appears at 3–9; that stretch reads RGERRRR. Residues 17–33 show a composition bias toward basic and acidic residues; it reads RTAERAARGGPGRRDGR. The helical; Signal-anchor for type II membrane protein transmembrane segment at 39–59 threads the bilayer; the sequence is STAGGVALAVVVLSLALGMSG. The Lumenal segment spans residues 60 to 837; the sequence is RWVLAWYRAR…LVLLAMAEDY (778 aa). The segment at 76–137 is required for endoplasmic reticulum targeting; it reads SAPPVLPADS…PGTPKLRHTC (62 aa). The active-site Proton donor is D583. Residue N657 is glycosylated (N-linked (GlcNAc...) asparagine). Residue E807 is the Proton acceptor of the active site.

The protein belongs to the glycosyl hydrolase 63 family.

The protein localises to the endoplasmic reticulum membrane. It carries out the reaction N(4)-(alpha-D-Glc-(1-&gt;2)-alpha-D-Glc-(1-&gt;3)-alpha-D-Glc-(1-&gt;3)-alpha-D-Man-(1-&gt;2)-alpha-D-Man-(1-&gt;2)-alpha-D-Man-(1-&gt;3)-[alpha-D-Man-(1-&gt;2)-alpha-D-Man-(1-&gt;3)-[alpha-D-Man-(1-&gt;2)-alpha-D-Man-(1-&gt;6)]-alpha-D-Man-(1-&gt;6)]-beta-D-Man-(1-&gt;4)-beta-D-GlcNAc-(1-&gt;4)-beta-D-GlcNAc)-L-asparaginyl-[protein] + H2O = N(4)-(alpha-D-Glc-(1-&gt;3)-alpha-D-Glc-(1-&gt;3)-alpha-D-Man-(1-&gt;2)-alpha-D-Man-(1-&gt;2)-alpha-D-Man-(1-&gt;3)-[alpha-D-Man-(1-&gt;2)-alpha-D-Man-(1-&gt;3)-[alpha-D-Man-(1-&gt;2)-alpha-D-Man-(1-&gt;6)]-alpha-D-Man-(1-&gt;6)]-beta-D-Man-(1-&gt;4)-beta-D-GlcNAc-(1-&gt;4)-beta-D-GlcNAc)-L-asparaginyl-[protein] + beta-D-glucose. Its pathway is glycan metabolism; N-glycan degradation. Inhibited by 1-deoxynojirimycin (40% inhibition) and N,N-dimethyl-deoxynojirimycin (85% inhibition). In the context of N-glycan degradation, cleaves the distal alpha 1,2-linked glucose residue from the Glc(3)Man(9)GlcNAc(2) oligosaccharide precursor in a highly specific manner. The chain is Mannosyl-oligosaccharide glucosidase from Homo sapiens (Human).